The primary structure comprises 167 residues: NADH-quinone oxidoreductase subunit B (167 aa).

[4Fe-4S] cluster is bound by residues C40, C41, C105, and C134.

Belongs to the complex I 20 kDa subunit family. NDH-1 is composed of 14 different subunits. Subunits NuoB, C, D, E, F, and G constitute the peripheral sector of the complex. Requires [4Fe-4S] cluster as cofactor.

The protein resides in the cell inner membrane. The enzyme catalyses a quinone + NADH + 5 H(+)(in) = a quinol + NAD(+) + 4 H(+)(out). NDH-1 shuttles electrons from NADH, via FMN and iron-sulfur (Fe-S) centers, to quinones in the respiratory chain. The immediate electron acceptor for the enzyme in this species is believed to be ubiquinone. Couples the redox reaction to proton translocation (for every two electrons transferred, four hydrogen ions are translocated across the cytoplasmic membrane), and thus conserves the redox energy in a proton gradient. The sequence is that of NADH-quinone oxidoreductase subunit B from Campylobacter jejuni (strain RM1221).